The following is a 348-amino-acid chain: D-alanine--D-alanine ligase (348 aa).

Positions 136 to 344 (KSVFKSYNLP…LEKLVANLIE (209 aa)) constitute an ATP-grasp domain. 171–226 (NKIISYPCFIKPANLGSSVGITKAYSKEEFIAGIEFAAKYDERIIVEKSIEGRELE) serves as a coordination point for ATP. Mg(2+) is bound by residues D297, E311, and N313.

Belongs to the D-alanine--D-alanine ligase family. Mg(2+) is required as a cofactor. Requires Mn(2+) as cofactor.

Its subcellular location is the cytoplasm. The catalysed reaction is 2 D-alanine + ATP = D-alanyl-D-alanine + ADP + phosphate + H(+). The protein operates within cell wall biogenesis; peptidoglycan biosynthesis. In terms of biological role, cell wall formation. The sequence is that of D-alanine--D-alanine ligase from Prochlorococcus marinus (strain NATL2A).